Here is a 149-residue protein sequence, read N- to C-terminus: Protein OPG200 (149 aa).

This sequence belongs to the orthopoxvirus OPG200 family. As to quaternary structure, homodimers. Interacts with host IKBKB; this interaction inhibits host NF-kappa-B activation.

Contributes to virulence by binding to the host IKBKB subunit of the IKK complex and preventing host NF-kappa-B activation in response to pro-inflammatory stimuli such as TNF-alpha or IL1B. Mechanistically, sterically hinders the direct contact between the kinase domains of IKBKB in the IKK complex containing IKBKB, CHUK/IKKA and NEMO. This chain is Protein OPG200 (OPG200), found in Vaccinia virus (strain Western Reserve) (VACV).